Consider the following 551-residue polypeptide: PA-phosphatase related-family protein DDB_G0268928 (551 aa).

2 stretches are compositionally biased toward polar residues: residues 26-47 (TESL…SGKD) and 137-152 (KYNT…SSNK). 2 disordered regions span residues 26–50 (TESL…DYSS) and 123–172 (KGED…NNNN). The span at 153–171 (TQTTVLNNSTTSSNNINNN) shows a compositional bias: low complexity. 7 helical membrane passes run 211–231 (SYSD…SIIY), 232–252 (SLLV…LVFI), 273–293 (LAVG…AVVL), 346–366 (ILQL…IYIL), 393–413 (MFIC…LIFP), 474–494 (ILPA…IATM), and 500–520 (YFVD…YGGF).

The protein belongs to the PA-phosphatase related phosphoesterase family.

It is found in the membrane. This is PA-phosphatase related-family protein DDB_G0268928 from Dictyostelium discoideum (Social amoeba).